The following is a 318-amino-acid chain: Taste receptor type 2 member 60 (318 aa).

At 1–7 (MNGDHMV) the chain is on the extracellular side. The helical transmembrane segment at 8–28 (LGSSVTDQKAIILVIILLLLC) threads the bilayer. Residues 29–40 (LVAIAGNGFITA) lie on the Cytoplasmic side of the membrane. A helical membrane pass occupies residues 41 to 61 (ALGVEWVLRGTLLPCDKLLVS). Residues 62–88 (LRASRFCLQWVVMGKTIYVLLYPTAFP) lie on the Extracellular side of the membrane. Residues 89–109 (YNPVLQFLAFQWDFLNAATLW) form a helical membrane-spanning segment. The Cytoplasmic segment spans residues 110-128 (FSSWLSVFYCVKIATFTHP). The chain crosses the membrane as a helical span at residues 129 to 149 (VFLWLKHKLSEWVPWMFFSSV). Residues 150–183 (GLSSFTTILFFIGNHSIYQNYLRNHLQPWNVTGN) are Extracellular-facing. Residues Asn163 and Asn179 are each glycosylated (N-linked (GlcNAc...) asparagine). The chain crosses the membrane as a helical span at residues 184 to 204 (SIWSYCEKFYLFPVKMITWTM). Residues 205–234 (PTAVFFICMILLITSLGRHMEKALLTTSGF) are Cytoplasmic-facing. Residues 235–255 (REPSVQAHVKALLALLSLAML) form a helical membrane-spanning segment. Residues 256–264 (FISYFLSLV) are Extracellular-facing. Residues 265-285 (LSAAGIFPPLDFKFWVGESVI) traverse the membrane as a helical segment. The Cytoplasmic segment spans residues 286 to 318 (YLCAGVHPIILLFSNRRLRAVLERCRSSRCRTP).

The protein belongs to the G-protein coupled receptor T2R family.

The protein resides in the membrane. Receptor that may play a role in the perception of bitterness and is gustducin-linked. May play a role in sensing the chemical composition of the gastrointestinal content. The activity of this receptor may stimulate alpha gustducin, mediate PLC-beta-2 activation and lead to the gating of TRPM5. This chain is Taste receptor type 2 member 60 (TAS2R60), found in Macaca mulatta (Rhesus macaque).